The primary structure comprises 97 residues: Biogenesis of lysosome-related organelles complex 1 subunit SNN1 (97 aa).

Positions 45–97 form a coiled coil; it reads VVRLKQIRNLLKEEQEYYNEEEGLGVERERLEELELRVEKLTQKYKKLLADCV.

The protein belongs to the SNAPIN family. As to quaternary structure, component of the biogenesis of lysosome-related organelles complex-1 (BLOC-1).

It is found in the endosome. Component of the biogenesis of lysosome-related organelles complex-1 (BLOC-1), a complex involved in endosomal cargo sorting. The polypeptide is Biogenesis of lysosome-related organelles complex 1 subunit SNN1 (SNN1) (Lachancea thermotolerans (strain ATCC 56472 / CBS 6340 / NRRL Y-8284) (Yeast)).